The sequence spans 142 residues: Hemoglobin subunit alpha-1 (142 aa).

The Globin domain occupies 2-142; that stretch reads VLSPADKTNI…VSTVLTSKYR (141 aa). His-59 contacts O2. His-88 lines the heme b pocket.

The protein belongs to the globin family. As to quaternary structure, heterotetramer of two alpha chains and two beta chains. Red blood cells.

Functionally, involved in oxygen transport from the lung to the various peripheral tissues. This is Hemoglobin subunit alpha-1 from Arctocephalus galapagoensis (Galapagoes fur seal).